We begin with the raw amino-acid sequence, 504 residues long: Lysine--tRNA ligase (504 aa).

Mg(2+) is bound by residues Glu-411 and Glu-418.

It belongs to the class-II aminoacyl-tRNA synthetase family. In terms of assembly, homodimer. The cofactor is Mg(2+).

Its subcellular location is the cytoplasm. It catalyses the reaction tRNA(Lys) + L-lysine + ATP = L-lysyl-tRNA(Lys) + AMP + diphosphate. This is Lysine--tRNA ligase from Clostridium botulinum (strain Okra / Type B1).